Consider the following 329-residue polypeptide: Deoxynucleotidyltransferase terminal-interacting protein 1 (329 aa).

The tract at residues 1–27 (MGATGDVEQPRGPGGAERGGPELGDAG) is disordered. Residues 12–22 (GPGGAERGGPE) show a composition bias toward gly residues. The important for dimerization stretch occupies residues 56-147 (MTTSFTDPAI…RLTHELPGIK (92 aa)). Positions 159 to 173 (RGSPIPKKRKGRPPG) form a DNA-binding region, a.T hook. Phosphoserine is present on S161. The Nuclear localization signal motif lies at 164–170 (PKKRKGR). Residues 197–316 (REGPKWDPAR…MRKYMETLRT (120 aa)) form an important for DNA and nucleosome binding region. Residues 216 to 237 (GSRANKALGMGGTRGRIYIKHP) constitute a DNA-binding region (H-T-H motif).

As to quaternary structure, monomer and homodimer. A minor proportion may form homotrimers. Interacts with ZNF541. Interacts with the terminal deoxynucleotidyltransferase DNTT. Interacts with TRERF1. Identified in a histone deacetylase complex that contains DNTTIP1, HDAC1 and MIDEAS; this complex assembles into a tetramer that contains four copies of each protein chain. Component of a histone deacetylase complex containing DNTTIP1, ZNF541, HDAC1 and HDAC2. Identified in a complex with KCTD19, HDAC1, HDAC2 and ZNF541.

Its subcellular location is the nucleus. In terms of biological role, increases DNTT terminal deoxynucleotidyltransferase activity (in vitro). Also acts as a transcriptional regulator, binding to the consensus sequence 5'-GNTGCATG-3' following an AT-tract. Associates with RAB20 promoter and positively regulates its transcription. Binds DNA and nucleosomes; may recruit HDAC1 complexes to nucleosomes or naked DNA. In Bos taurus (Bovine), this protein is Deoxynucleotidyltransferase terminal-interacting protein 1 (DNTTIP1).